We begin with the raw amino-acid sequence, 740 residues long: Copalyl diphosphate synthase 2 (740 aa).

Lys154 contacts substrate. Residues Asp287 and Asp289 each coordinate Mg(2+). The short motif at 287 to 290 is the DXDD motif element; that stretch reads DADD. Lys373 provides a ligand contact to substrate.

The protein belongs to the terpene synthase family. Mg(2+) is required as a cofactor.

It catalyses the reaction (2E,6E,10E)-geranylgeranyl diphosphate = (+)-copalyl diphosphate. It participates in secondary metabolite biosynthesis; terpenoid biosynthesis. Its function is as follows. Monofunctional diterpene synthase converting geranylgeranyl diphosphate to copalyl diphosphate. The chain is Copalyl diphosphate synthase 2 (CPS2) from Selaginella moellendorffii (Spikemoss).